The primary structure comprises 259 residues: MEDVQNSPAQVAMPIDRVGVKNLKLPLVVRDRAQGSQHTVATVDIGVDLPAEFKGTHMSRFVEALENWSEELDYNSMKRLLEDVKERLHARKAYALFRFPYFVRKGAPATASSGLVWYECRLTGELGDGKPSFLLELEVPVMTVCPCSKAISDEGAHSQRAVVRMSIRMTGFSWMEEFIDLAEAAGSSPVYTLLKREDEKFVTEDAFAHPTFVEDVVRAAAQRLEGHPHVAWFRVEVESFESIHCHNAFASIEREVRKG.

Belongs to the GTP cyclohydrolase IV family.

The catalysed reaction is GTP + H2O = 7,8-dihydroneopterin 3'-triphosphate + formate + H(+). It participates in cofactor biosynthesis; 7,8-dihydroneopterin triphosphate biosynthesis; 7,8-dihydroneopterin triphosphate from GTP: step 1/1. Functionally, converts GTP to 7,8-dihydroneopterin triphosphate. This Nitratidesulfovibrio vulgaris (strain DSM 19637 / Miyazaki F) (Desulfovibrio vulgaris) protein is GTP cyclohydrolase FolE2.